Here is a 601-residue protein sequence, read N- to C-terminus: CDPK-related kinase 5 (601 aa).

The span at 1–19 shows a compositional bias: polar residues; it reads MGLCTSKPNSSNSDQTPAR. Disordered regions lie at residues 1–55 and 70–98; these read MGLC…KSPF and KKTP…PPPS. A lipid anchor (N-myristoyl glycine) is attached at glycine 2. Low complexity predominate over residues 26–35; that stretch reads SESVKPSSSS. Residues 36–48 are compositionally biased toward polar residues; it reads VNGEDQCVTTTNN. The 263-residue stretch at 148–410 folds into the Protein kinase domain; sequence YELGDEVGRG…AAQALSHPWI (263 aa). ATP-binding positions include 154-162 and lysine 180; that span reads VGRGHFGYT. Aspartate 276 acts as the Proton acceptor in catalysis. Position 316 is a phosphoserine (serine 316). An autoinhibitory domain region spans residues 415 to 445; it reads DAKVPMDILVFKLMRAYLRSSSLRKAALRAL. The calmodulin binding (CaMBD) stretch occupies residues 434-454; the sequence is SSSLRKAALRALSKTLTVDEL. EF-hand domains lie at 452-488, 489-524, 525-564, and 567-596; these read DELF…ATDA, MKDS…VHQL, EALD…GPSV, and HAVL…VSSR. Residues serine 467, asparagine 469, threonine 471, asparagine 476, arginine 508, glutamate 513, asparagine 546, glutamate 553, aspartate 578, and lysine 580 each contribute to the Ca(2+) site. Serine 582 carries the phosphoserine modification.

The protein belongs to the protein kinase superfamily. Ser/Thr protein kinase family. CDPK subfamily. In terms of assembly, binds calmodulin (CaM) in a calcium-dependent manner.

The protein localises to the membrane. It carries out the reaction L-seryl-[protein] + ATP = O-phospho-L-seryl-[protein] + ADP + H(+). It catalyses the reaction L-threonyl-[protein] + ATP = O-phospho-L-threonyl-[protein] + ADP + H(+). Activated by calcium and calmodulin. Autophosphorylation may play an important role in the regulation of the kinase activity. Its function is as follows. May play a role in signal transduction pathways that involve calcium as a second messenger. The chain is CDPK-related kinase 5 (CRK5) from Arabidopsis thaliana (Mouse-ear cress).